The primary structure comprises 712 residues: Dipeptidyl-peptidase 7 (712 aa).

Positions 1-23 (MQMKLKSILLGAALLLGASGVAK) are cleaved as a signal peptide. H89 (charge relay system) is an active-site residue. Residues 136–173 (TDKVEGQLKGITDEMERLRKAQEVCQELAKKENADENQ) are a coiled coil. Catalysis depends on charge relay system residues D225 and S648.

The protein belongs to the peptidase S46 family.

The protein resides in the cell outer membrane. Is inhibited in vitro by typical serine protease inhibitors like diisopropyl fluorophosphate, Pefablock, and 3,4-dichloroisocoumarin, but not by typical cysteine class inhibitors such as E-64 or iododoacetic acid. Functionally, catalyzes the removal of dipeptides from the N-terminus of oligopeptides. Shows a broad specificity for both aliphatic and aromatic residues in the P1 position, with glycine or proline being not acceptable in this position. Most potently cleaves the synthetic substrate Met-Leu-methylcoumaryl-7-amide (Met-Leu-MCA), Leu-Arg-MCA and Lys-Ala-MCA to a lesser extent. Is likely involved in amino acid metabolism and bacterial growth of asaccharolytic P.gingivalis, that utilizes amino acids from extracellular proteinaceous nutrients as energy and carbon sources. This Porphyromonas gingivalis (strain ATCC 33277 / DSM 20709 / CIP 103683 / JCM 12257 / NCTC 11834 / 2561) protein is Dipeptidyl-peptidase 7.